The sequence spans 92 residues: UPF0473 protein OB2006 (92 aa).

Belongs to the UPF0473 family.

In Oceanobacillus iheyensis (strain DSM 14371 / CIP 107618 / JCM 11309 / KCTC 3954 / HTE831), this protein is UPF0473 protein OB2006.